Here is a 569-residue protein sequence, read N- to C-terminus: GATOR1 complex protein NPRL3 (569 aa).

Disordered regions lie at residues 27–60 (PFQRSQEHPASQTSKPRSRYAASNTGDHADEQDG) and 416–477 (PSEE…GDSP). Composition is skewed to polar residues over residues 34–52 (HPASQTSKPRSRYAASNTG) and 438–468 (SLSTPNALSFGSPTSSDDMTLTSPSMDNSSA). The residue at position 476 (Ser476) is a Phosphoserine.

The protein belongs to the NPR3 family. Within the GATOR complex, component of the GATOR1 subcomplex, made of DEPDC5, NPRL2 and NPRL3. GATOR1 mediates the strong interaction of the GATOR complex with small GTPases Rag (RagA/RRAGA, RagB/RRAGB, RagC/RRAGC and/or RagD/RRAGD) heterodimers. GATOR1 interacts with GPR155/LYCHOS; interaction takes place in presence of cholesterol and prevents interaction between GATOR1 and KICSTOR. Widely expressed. Expressed in the frontal lobe cortex as well as in the temporal, parietal, and occipital lobes.

The protein resides in the lysosome membrane. Functionally, as a component of the GATOR1 complex functions as an inhibitor of the amino acid-sensing branch of the mTORC1 pathway. In response to amino acid depletion, the GATOR1 complex has GTPase activating protein (GAP) activity and strongly increases GTP hydrolysis by RagA/RRAGA (or RagB/RRAGB) within heterodimeric Rag complexes, thereby turning them into their inactive GDP-bound form, releasing mTORC1 from lysosomal surface and inhibiting mTORC1 signaling. In the presence of abundant amino acids, the GATOR1 complex is negatively regulated by GATOR2, the other GATOR subcomplex, in this amino acid-sensing branch of the TORC1 pathway. The polypeptide is GATOR1 complex protein NPRL3 (Homo sapiens (Human)).